The following is a 345-amino-acid chain: Very-long-chain 3-oxoacyl-CoA reductase (345 aa).

A helical membrane pass occupies residues 26–46 (GAAVLLATGGLFLASRVLTFV). NADP(+)-binding residues include valine 71, aspartate 125, aspartate 133, asparagine 152, tyrosine 219, lysine 223, isoleucine 252, and serine 254. Residue tyrosine 219 is the Proton donor of the active site. Residue lysine 223 is the Lowers pKa of active site Tyr of the active site.

Belongs to the short-chain dehydrogenases/reductases (SDR) family.

Its subcellular location is the endoplasmic reticulum membrane. The enzyme catalyses a very-long-chain (3R)-3-hydroxyacyl-CoA + NADP(+) = a very-long-chain 3-oxoacyl-CoA + NADPH + H(+). It participates in lipid metabolism; fatty acid biosynthesis. Component of the microsomal membrane bound fatty acid elongation system, which produces the 26-carbon very long-chain fatty acids (VLCFA) from palmitate. Catalyzes the reduction of the 3-ketoacyl-CoA intermediate that is formed in each cycle of fatty acid elongation. VLCFAs serve as precursors for ceramide and sphingolipids. The protein is Very-long-chain 3-oxoacyl-CoA reductase of Aspergillus clavatus (strain ATCC 1007 / CBS 513.65 / DSM 816 / NCTC 3887 / NRRL 1 / QM 1276 / 107).